We begin with the raw amino-acid sequence, 420 residues long: Carbohydrate sulfotransferase 1 (420 aa).

Position 1 (Met1) is a topological domain, cytoplasmic. A helical; Signal-anchor for type II membrane protein transmembrane segment spans residues 2–23; it reads QCSWKAVILLALVSIAIQYTAI. Residues 24-420 lie on the Lumenal side of the membrane; the sequence is RTFTAKPFHI…IEDKTFIPFL (397 aa). N-linked (GlcNAc...) asparagine glycosylation occurs at Asn64. 77 to 83 lines the 3'-phosphoadenylyl sulfate pocket; it reads TRSGSSF. Residues Asn153 and Asn197 are each glycosylated (N-linked (GlcNAc...) asparagine). 242–250 is a 3'-phosphoadenylyl sulfate binding site; sequence RDPRGILSS. N-linked (GlcNAc...) asparagine glycans are attached at residues Asn342 and Asn405.

Belongs to the sulfotransferase 1 family. Gal/GlcNAc/GalNAc subfamily.

It is found in the golgi apparatus membrane. It catalyses the reaction 3'-phosphoadenylyl sulfate + keratan = adenosine 3',5'-bisphosphate + keratan 6'-sulfate.. Functionally, sulfotransferase that utilizes 3'-phospho-5'-adenylyl sulfate (PAPS) as sulfonate donor to catalyze the transfer of sulfate to position 6 of galactose (Gal) residues of keratan. The protein is Carbohydrate sulfotransferase 1 (chst1) of Danio rerio (Zebrafish).